The sequence spans 647 residues: Threonine--tRNA ligase (647 aa).

The region spanning 1-61 (MIKITFPDGA…EEDGSIEIVT (61 aa)) is the TGS domain. The segment at 240–538 (DHRKLGKELD…LIETYKGAFP (299 aa)) is catalytic. Positions 334, 385, and 515 each coordinate Zn(2+).

It belongs to the class-II aminoacyl-tRNA synthetase family. In terms of assembly, homodimer. Zn(2+) is required as a cofactor.

It is found in the cytoplasm. The catalysed reaction is tRNA(Thr) + L-threonine + ATP = L-threonyl-tRNA(Thr) + AMP + diphosphate + H(+). Catalyzes the attachment of threonine to tRNA(Thr) in a two-step reaction: L-threonine is first activated by ATP to form Thr-AMP and then transferred to the acceptor end of tRNA(Thr). Also edits incorrectly charged L-seryl-tRNA(Thr). This chain is Threonine--tRNA ligase, found in Streptococcus pyogenes serotype M4 (strain MGAS10750).